The following is a 1199-amino-acid chain: Chromatin structure-remodeling complex subunit snf21 (1199 aa).

In terms of domain architecture, HSA spans 256–328 (QRSDRERRLK…AKQRLQALKE (73 aa)). Residues 429 to 594 (ISLYNNHLNG…WALLNFVLPR (166 aa)) form the Helicase ATP-binding domain. 442 to 449 (DEMGLGKT) is a binding site for ATP. A DEGH box motif is present at residues 544–547 (DEGH). In terms of domain architecture, Helicase C-terminal spans 740 to 903 (LLDRILPKLF…STPEEREAFL (164 aa)). Residues 1017–1059 (MESEARPTRGRPKRNIASVDETPALTLNGKPKKKRGPAPDTLT) are disordered. The Bromo domain occupies 1061-1171 (EHRSLLRRVC…TAMETKIEEL (111 aa)).

The protein belongs to the SNF2/RAD54 helicase family. In terms of assembly, component of the RSC complex composed of at least arp9, arp42, rsc1, rsc4, rsc7, rsc9, rsc58, sfh1, snf21, ssr1, ssr2, ssr3 and ssr4. The complex interacts with histone and histone variant components of centromeric chromatin.

The protein localises to the nucleus. Helicase. Component of the chromatin structure remodeling complex (RSC), which is involved in transcription regulation and nucleosome positioning. Controls particularly membrane and organelle development genes. This chain is Chromatin structure-remodeling complex subunit snf21 (snf21), found in Schizosaccharomyces pombe (strain 972 / ATCC 24843) (Fission yeast).